We begin with the raw amino-acid sequence, 24 residues long: Brevinin-1Sa (24 aa).

A disulfide bond links Cys18 and Cys24.

In terms of tissue distribution, expressed by the skin glands.

Its subcellular location is the secreted. In terms of biological role, antibacterial activity against Gram-negative bacterium E.coli. The sequence is that of Brevinin-1Sa from Lithobates sphenocephalus (Southern leopard frog).